The sequence spans 201 residues: Small ribosomal subunit protein uS4c (201 aa).

Positions 20–39 (GLTRKTPKSGSNLKKKFHSG) are disordered. Positions 89–150 (MRLDNILFRL…NQRSKRLVQN (62 aa)) constitute an S4 RNA-binding domain.

This sequence belongs to the universal ribosomal protein uS4 family. In terms of assembly, part of the 30S ribosomal subunit. Contacts protein S5. The interaction surface between S4 and S5 is involved in control of translational fidelity.

The protein localises to the plastid. It localises to the chloroplast. Functionally, one of the primary rRNA binding proteins, it binds directly to 16S rRNA where it nucleates assembly of the body of the 30S subunit. With S5 and S12 plays an important role in translational accuracy. The sequence is that of Small ribosomal subunit protein uS4c (rps4) from Oryza nivara (Indian wild rice).